The primary structure comprises 356 residues: Probable arabinogalactan endo-beta-1,4-galactanase A (356 aa).

Positions 1 to 21 (MLGKTVLLPLLVLLCHSLASA) are cleaved as a signal peptide. Asn-133 is a glycosylation site (N-linked (GlcNAc...) asparagine). Glu-157 serves as the catalytic Proton donor. Residue Glu-268 is the Nucleophile of the active site.

This sequence belongs to the glycosyl hydrolase 53 family.

Its subcellular location is the secreted. It carries out the reaction The enzyme specifically hydrolyzes (1-&gt;4)-beta-D-galactosidic linkages in type I arabinogalactans.. In terms of biological role, endogalactanase involved in the degradation of plant cell wall polysaccharides, and more particularly of hairy regions of pectin. The sequence is that of Probable arabinogalactan endo-beta-1,4-galactanase A (galA) from Aspergillus fumigatus (strain CBS 144.89 / FGSC A1163 / CEA10) (Neosartorya fumigata).